Reading from the N-terminus, the 483-residue chain is RNA-binding protein Nova-1 (483 aa).

The segment at Met1–Thr44 is disordered. Residues Lys27–Asn43 carry the Bipartite nuclear localization signal motif. 3 KH domains span residues Gln49 to Ile116, Ile147 to Ile213, and Lys397 to Ile464. The required for RNA binding stretch occupies residues Gly395–Pro479.

Interacts with PTBP2; the interaction is direct.

Its subcellular location is the nucleus. Functions to regulate alternative splicing in neurons by binding pre-mRNA in a sequence-specific manner to activate exon inclusion or exclusion. It binds specifically to the sequences 5'-YCAY-3' and regulates splicing in only a subset of regulated exons. Binding to an exonic 5'-YCAY-3' cluster changes the protein complexes assembled on pre-mRNA, blocking U1 snRNP binding and exon inclusion, whereas binding to an intronic 5'-YCAY-3' cluster enhances spliceosome assembly and exon inclusion. Binding to 5'-YCAY-3' clusters results in a local and asymmetric action to regulate spliceosome assembly and alternative splicing in neurons. Binding to an exonic 5'-YCAY-3' cluster changed the protein complexes assembled on pre-mRNA, blocking U1 snRNP (small nuclear ribonucleoprotein) binding and exon inclusion, whereas binding to an intronic 5'-YCAY-3' cluster enhanced spliceosome assembly and exon inclusion. With NOVA1, they perform unique biological functions in different brain areas and cell types. Autoregulates its own expression by acting as a splicing repressor. Acts to activate the inclusion of exon E3A in the glycine receptor alpha-2 chain and of exon E9 in gamma-aminobutyric-acid receptor gamma-2 subunit via a distal downstream UCAU-rich intronic splicing enhancer. Acts to regulate a novel glycine receptor alpha-2 chain splice variant (alpha-2N) in developing spinal cord. The protein is RNA-binding protein Nova-1 (NOVA1) of Macaca fascicularis (Crab-eating macaque).